The following is a 543-amino-acid chain: CTP synthase (543 aa).

Residues 1–265 are amidoligase domain; sequence MTRYIFVTGG…DDIVVERFGL (265 aa). Ser13 is a binding site for CTP. Position 13 (Ser13) interacts with UTP. ATP contacts are provided by residues 14 to 19 and Asp71; that span reads SLGKGI. Residues Asp71 and Glu139 each coordinate Mg(2+). CTP contacts are provided by residues 146-148, 186-191, and Lys222; these read DIE and KTKPTQ. UTP contacts are provided by residues 186–191 and Lys222; that span reads KTKPTQ. The Glutamine amidotransferase type-1 domain maps to 290-541; sequence TIAMVGKYME…VNAALAQKAR (252 aa). Gly351 is a binding site for L-glutamine. Catalysis depends on Cys378, which acts as the Nucleophile; for glutamine hydrolysis. Residues 379 to 382, Glu402, and Arg469 each bind L-glutamine; that span reads LGMQ. Residues His514 and Glu516 contribute to the active site.

This sequence belongs to the CTP synthase family. As to quaternary structure, homotetramer.

The enzyme catalyses UTP + L-glutamine + ATP + H2O = CTP + L-glutamate + ADP + phosphate + 2 H(+). It catalyses the reaction L-glutamine + H2O = L-glutamate + NH4(+). The catalysed reaction is UTP + NH4(+) + ATP = CTP + ADP + phosphate + 2 H(+). Its pathway is pyrimidine metabolism; CTP biosynthesis via de novo pathway; CTP from UDP: step 2/2. Allosterically activated by GTP, when glutamine is the substrate; GTP has no effect on the reaction when ammonia is the substrate. The allosteric effector GTP functions by stabilizing the protein conformation that binds the tetrahedral intermediate(s) formed during glutamine hydrolysis. Inhibited by the product CTP, via allosteric rather than competitive inhibition. Catalyzes the ATP-dependent amination of UTP to CTP with either L-glutamine or ammonia as the source of nitrogen. Regulates intracellular CTP levels through interactions with the four ribonucleotide triphosphates. This Azotobacter vinelandii (strain DJ / ATCC BAA-1303) protein is CTP synthase.